The chain runs to 315 residues: 4-diphosphocytidyl-2-C-methyl-D-erythritol kinase (315 aa).

Residue K26 is part of the active site. 111–121 (PLAGGLAGGSA) provides a ligand contact to ATP. D153 is an active-site residue.

It belongs to the GHMP kinase family. IspE subfamily.

The enzyme catalyses 4-CDP-2-C-methyl-D-erythritol + ATP = 4-CDP-2-C-methyl-D-erythritol 2-phosphate + ADP + H(+). It functions in the pathway isoprenoid biosynthesis; isopentenyl diphosphate biosynthesis via DXP pathway; isopentenyl diphosphate from 1-deoxy-D-xylulose 5-phosphate: step 3/6. Functionally, catalyzes the phosphorylation of the position 2 hydroxy group of 4-diphosphocytidyl-2C-methyl-D-erythritol. In Salinispora arenicola (strain CNS-205), this protein is 4-diphosphocytidyl-2-C-methyl-D-erythritol kinase.